We begin with the raw amino-acid sequence, 70 residues long: Phycocyanin-645 alpha-2 chain (70 aa).

Residue R16 participates in (2R,3E)-phycocyanobilin binding. Positions 18, 26, and 41 each coordinate mesobiliverdin.

It belongs to the phycoerythrin family. Heterotetramer of 2 different alpha chains and 2 identical beta chains which form 2 alpha-beta heterodimers within the heterotetramer. Post-translationally, contains one phycocyanobilin chromophore, one mesobiliverdin chromophore and one 15,16-dihydrobiliverdin chromophore with binding mediated by both the alpha and beta subunits.

The protein localises to the plastid. It localises to the chloroplast thylakoid membrane. Functionally, light-harvesting photosynthetic tetrapyrrole chromophore-protein from the phycobiliprotein complex. This Chroomonas sp protein is Phycocyanin-645 alpha-2 chain.